Reading from the N-terminus, the 763-residue chain is Eukaryotic translation initiation factor 3 subunit B (763 aa).

A sufficient for interaction with HCR1 and TIF32 region spans residues 1–136; the sequence is MKNFLPRTLK…LFVECGSMND (136 aa). Positions 28–261 are sufficient for interaction with PIC8; sequence RNTQLKRSKI…GVTAWGGPNF (234 aa). A Phosphoserine modification is found at S61. Y67 is subject to Phosphotyrosine. Positions 77–162 constitute an RRM domain; sequence QYIVVNGAPV…HRLFLYTMKD (86 aa). WD repeat units lie at residues 228 to 266, 277 to 325, 373 to 416, 484 to 524, 544 to 589, and 605 to 650; these read RENWSTNYVRFSPKGTYLFSYHQQGVTAWGGPNFDRLRR, VSPN…LMAT, LKPS…SACT, ELKD…IRFY, IPKT…EKNI, and PTYS…VKED. Position 669 is a phosphoserine (S669).

Belongs to the eIF-3 subunit B family. In terms of assembly, the eukaryotic translation initiation factor 3 (eIF-3) core complex is composed of TIF32, PRT1, NIP1, TIF34 and TIF35. A subcomplex of TIF32, NIP1 and PRT1 mediates the interaction with eIF-1, TIF5/eIF-5 and HCR1. The factors eIF-1, eIF-2, eIF-3, TIF5/eIF-5 and methionyl-tRNAi form a multifactor complex (MFC) that may bind to the 40S ribosome.

It is found in the cytoplasm. Its function is as follows. RNA-binding component of the eukaryotic translation initiation factor 3 (eIF-3) complex, which is involved in protein synthesis of a specialized repertoire of mRNAs and, together with other initiation factors, stimulates binding of mRNA and methionyl-tRNAi to the 40S ribosome. The eIF-3 complex specifically targets and initiates translation of a subset of mRNAs involved in cell proliferation. This chain is Eukaryotic translation initiation factor 3 subunit B, found in Saccharomyces cerevisiae (strain ATCC 204508 / S288c) (Baker's yeast).